Consider the following 348-residue polypeptide: Dihydroorotase (348 aa).

Residues His-17 and His-19 each coordinate Zn(2+). Substrate is bound by residues 19-21 and Asn-45; that span reads HLR. The Zn(2+) site is built by Lys-103, His-140, and His-178. Lys-103 is subject to N6-carboxylysine. His-140 is a binding site for substrate. Residue Leu-223 coordinates substrate. Asp-251 is a Zn(2+) binding site. Asp-251 is a catalytic residue. 2 residues coordinate substrate: His-255 and Ala-267.

It belongs to the metallo-dependent hydrolases superfamily. DHOase family. Class II DHOase subfamily. In terms of assembly, homodimer. Requires Zn(2+) as cofactor.

The enzyme catalyses (S)-dihydroorotate + H2O = N-carbamoyl-L-aspartate + H(+). It participates in pyrimidine metabolism; UMP biosynthesis via de novo pathway; (S)-dihydroorotate from bicarbonate: step 3/3. In terms of biological role, catalyzes the reversible cyclization of carbamoyl aspartate to dihydroorotate. The sequence is that of Dihydroorotase from Shigella dysenteriae serotype 1 (strain Sd197).